The chain runs to 334 residues: tRNA methyltransferase 10 homolog A (334 aa).

Disordered stretches follow at residues 1 to 101 (MSLE…SRKR) and 290 to 334 (PLTE…EQNS). Over residues 26–40 (HAGNNTPLQENSSAP) the composition is skewed to polar residues. Residues 62-94 (KQWEDQRELRKQKRKEKRQKRKLERQAQAEHNI) adopt a coiled-coil conformation. A compositionally biased stretch (basic residues) spans 71 to 84 (RKQKRKEKRQKRKL). Positions 85 to 98 (ERQAQAEHNIDANS) are enriched in basic and acidic residues. Residues 98–289 (SRKRFRHEVQ…SVLPQRKGAI (192 aa)) enclose the SAM-dependent MTase TRM10-type domain. The segment covering 305-317 (QEDGEDSDSDSSI) has biased composition (acidic residues).

Belongs to the class IV-like SAM-binding methyltransferase superfamily. TRM10 family.

The enzyme catalyses guanosine(9) in tRNA + S-adenosyl-L-methionine = N(1)-methylguanosine(9) in tRNA + S-adenosyl-L-homocysteine + H(+). In terms of biological role, S-adenosyl-L-methionine-dependent guanine N(1)-methyltransferase that catalyzes the formation of N(1)-methylguanine at position 9 (m1G9) in tRNAs. Probably not able to catalyze formation of N(1)-methyladenine at position 9 (m1A9) in tRNAs. This Xenopus tropicalis (Western clawed frog) protein is tRNA methyltransferase 10 homolog A (trmt10a).